Reading from the N-terminus, the 114-residue chain is Seed trypsin/chymotrypsin inhibitor TI5-72 (114 aa).

A signal peptide spans 1-28 (MELMNKKVMMKLALMVFLLSFAANVVNA). Positions 29-42 (RFDSTSFITQVLSN) are excised as a propeptide. Disulfide bonds link cysteine 50–cysteine 103, cysteine 51–cysteine 66, cysteine 54–cysteine 99, cysteine 56–cysteine 64, cysteine 73–cysteine 80, cysteine 77–cysteine 92, and cysteine 82–cysteine 90.

This sequence belongs to the Bowman-Birk serine protease inhibitor family. As to expression, seed.

Functionally, inhibitor of trypsin and of chymotrypsin. May function as a natural phytochemical defense against predators. The chain is Seed trypsin/chymotrypsin inhibitor TI5-72 (TI572) from Pisum sativum (Garden pea).